A 204-amino-acid chain; its full sequence is Factor arrest protein 3 (204 aa).

In terms of assembly, component of a complex at least composed of FAR3, FAR7, FAR8, FAR10, FAR11 and VPS64.

It localises to the endoplasmic reticulum. Functionally, participates in the control of the reentry into the cell cycle following pheromone treatment. This chain is Factor arrest protein 3 (FAR3), found in Saccharomyces cerevisiae (strain ATCC 204508 / S288c) (Baker's yeast).